Reading from the N-terminus, the 291-residue chain is Protein US2 (291 aa).

Gly2 bears the N-acetylglycine; by host mark. The segment at 223–281 (NKPRPASSRPHPATHPTQRPCFTCMGRPEIPDEPSWQTGDDDPQNPGPPLAVGDEWPPS) is disordered.

Belongs to the herpesviridae HHV-1 US2 protein family. In terms of assembly, interacts with host KRT18. Interacts with host MAP3K7; this interaction induces host NF-kappa-B pathway.

Its subcellular location is the virion. It is found in the host cytoplasm. The protein resides in the host cell surface. It localises to the host nucleus. Its function is as follows. Plays a role in the activation of the host NF-kappa-B pathway by interacting with and thus activating the component MAP3K7. In Human herpesvirus 2 (strain HG52) (HHV-2), this protein is Protein US2.